A 732-amino-acid chain; its full sequence is uncharacterized protein (732 aa).

2 disordered regions span residues 38–90 and 226–629; these read TTLA…NNNK and EESP…MDYQ. Residues 47-56 show a composition bias toward low complexity; the sequence is QQQQQQQQQQ. Polar residues predominate over residues 57–76; the sequence is PPSSSTTKEGGATTTQDNKL. 3 stretches are compositionally biased toward low complexity: residues 77-89, 231-247, and 254-318; these read TANG…NNNN, TTTT…TTAA, and TTTT…GTNS. The segment covering 327–338 has biased composition (basic residues); it reads KAKKGVPKKAPT. 3 stretches are compositionally biased toward low complexity: residues 339–383, 401–421, and 487–523; these read KKQP…APKT, KTSK…STTK, and SAST…IKSK. Positions 553-566 are enriched in acidic residues; it reads AAAEEQEEEEEEDN. Composition is skewed to low complexity over residues 567–577 and 593–609; these read SNGIQNNNSSN and DNFS…NGLL. Residues 610–621 show a composition bias toward acidic residues; sequence SEDDDDDDDDDN.

This is an uncharacterized protein from Dictyostelium discoideum (Social amoeba).